Consider the following 290-residue polypeptide: MDKIIKTISESGAFRAFVLDSTETVRTAQEKHQTQASSTVALGRTLIASQILAANEKGNTKLTVKVLGSSSLGAIITVADTKGNVKGYVQNPGVDIKKTATGEVLVGPFVGNGQFLVITDYGAGNPYNSITPLISGEIGEDLAFYLTESQQTPSAVGLNVLLDEEDKVKVAGGFLVQVLPGAKKEEIARFEKRIQEMPAISTLLESDDHIEALLKAIYGDEAYKRLSEEEIRFQCDCSHERFMNALASLPSSDLQEMKEEDHGAEITCQFCQTTYNFDEKDLEELIRDKS.

Intrachain disulfides connect Cys-235–Cys-237 and Cys-268–Cys-271.

The protein belongs to the HSP33 family. Post-translationally, under oxidizing conditions two disulfide bonds are formed involving the reactive cysteines. Under reducing conditions zinc is bound to the reactive cysteines and the protein is inactive.

Its subcellular location is the cytoplasm. Redox regulated molecular chaperone. Protects both thermally unfolding and oxidatively damaged proteins from irreversible aggregation. Plays an important role in the bacterial defense system toward oxidative stress. This is 33 kDa chaperonin from Streptococcus pneumoniae serotype 19F (strain G54).